A 403-amino-acid polypeptide reads, in one-letter code: Malate dehydrogenase, chloroplastic (403 aa).

Residues 1-80 constitute a chloroplast transit peptide; that stretch reads MATATSASLF…DKKPYGFKIN (80 aa). NAD(+) contacts are provided by residues 89-95 and Asp115; that span reads GAAGGIG. Substrate is bound by residues Arg162 and Arg168. NAD(+) contacts are provided by residues Asn175 and 198–200; that span reads ISN. Positions 200 and 234 each coordinate substrate. Residue His258 is the Proton acceptor of the active site. An NAD(+)-binding site is contributed by Met309.

Belongs to the LDH/MDH superfamily. MDH type 1 family. Homodimer. In terms of tissue distribution, expressed in rosette leaves. Expressed in meristematic regions of roots and shoots, cotyledons, young leaves, trichomes, stamen, pollen, tapetum, gynoecium and ovules.

The protein localises to the plastid. Its subcellular location is the chloroplast stroma. The catalysed reaction is (S)-malate + NAD(+) = oxaloacetate + NADH + H(+). Its function is as follows. Catalyzes a reversible NAD-dependent dehydrogenase reaction involved in central metabolism and redox homeostasis between organelle compartments. Plays a key role in the metabolism of dark chloroplasts and non-green plastids. Essential for embryo viability. Plays an essential role in heterotrophic metabolism in embryos, and autotrophic metabolism in photosynthetic tissues as well. The protein is Malate dehydrogenase, chloroplastic of Arabidopsis thaliana (Mouse-ear cress).